We begin with the raw amino-acid sequence, 240 residues long: Probable transcriptional regulatory protein HPG27_148 (240 aa).

The protein belongs to the TACO1 family.

It is found in the cytoplasm. The polypeptide is Probable transcriptional regulatory protein HPG27_148 (Helicobacter pylori (strain G27)).